The following is an 83-amino-acid chain: MYB-like transcription factor ETC1 (83 aa).

In terms of domain architecture, Myb-like spans 35-72; the sequence is AQEEEDLICRMYKLVGERWDLIAGRIPGRTAEEIERFW.

In terms of tissue distribution, expressed in developing trichomes and non-root hair cells.

The protein resides in the nucleus. Its function is as follows. MYB-type transcription factor involved in epidermal cell fate specification. Acts as a negative regulator of trichome development, by mediating lateral inhibition. Promotes the formation of hair developing cells in H position in root epidermis, probably by inhibiting non-hair cell formation. This is MYB-like transcription factor ETC1 (ETC1) from Arabidopsis thaliana (Mouse-ear cress).